The sequence spans 966 residues: Isoleucine--tRNA ligase (966 aa).

The segment covering 1-16 has biased composition (basic and acidic residues); that stretch reads MSDDKRAKSDKNEKNK. Positions 1–24 are disordered; that stretch reads MSDDKRAKSDKNEKNKYPVNLLDT. Residues 69 to 79 carry the 'HIGH' region motif; it reads PYANGDIHIGH. Glutamate 599 provides a ligand contact to L-isoleucyl-5'-AMP. Residues 640–644 carry the 'KMSKS' region motif; that stretch reads KMSKS. Residue lysine 643 participates in ATP binding. Zn(2+) is bound by residues cysteine 929, cysteine 932, cysteine 949, and cysteine 952.

Belongs to the class-I aminoacyl-tRNA synthetase family. IleS type 1 subfamily. In terms of assembly, monomer. It depends on Zn(2+) as a cofactor.

It localises to the cytoplasm. It carries out the reaction tRNA(Ile) + L-isoleucine + ATP = L-isoleucyl-tRNA(Ile) + AMP + diphosphate. Its function is as follows. Catalyzes the attachment of isoleucine to tRNA(Ile). As IleRS can inadvertently accommodate and process structurally similar amino acids such as valine, to avoid such errors it has two additional distinct tRNA(Ile)-dependent editing activities. One activity is designated as 'pretransfer' editing and involves the hydrolysis of activated Val-AMP. The other activity is designated 'posttransfer' editing and involves deacylation of mischarged Val-tRNA(Ile). This chain is Isoleucine--tRNA ligase, found in Cupriavidus taiwanensis (strain DSM 17343 / BCRC 17206 / CCUG 44338 / CIP 107171 / LMG 19424 / R1) (Ralstonia taiwanensis (strain LMG 19424)).